The sequence spans 560 residues: MSETINTAAQFPSFEKPTVQFNEKGWGPCELPDTFKDVPYQPFSKNDRLGKICDWTNTSSNDKKYQNKYASSFGTGNQYSYYHEEDETTFHLVDTARVQKPPHQRGRFRNMRNSRSGRGRNARGGLNTHGMTTLSGKNVKARDPRHGRGMGKKFGHRGPPPKMRESSVAVRADWASIEEMDFPRLIKLSLPNIKEGVDIVTCGTLEYYDKTYDRINVKNEKPLQKIDRIVHTVTTTDDPVIRRLSKTVGNVFATDAILATIMCSTRSNYSWDIVIEKVGDKVFMDKRDHTEFDLLTVNESSVEPPTDDDSSCNSPRNLAIEATFINHNFSQQVLKTGDQEPKYKFEESNPFISEDEDIQVASVGYRYKKWELGSDIVLVARCEHDGVLQTPSGEPQFMTIKALNEWDSKLANGVEWRQKLDTQRGAVLANELRNNACKLAKWTVQAVLAGSDQLKLGYVSRINPRDHSRHVILGTQQFKPHEFATQINLSMDNAWGILRCIIDLVMKQKDGKYLIMKDPNKPIIRLYDIPDNTFDSDDSDDGEGDDEGFQQVYNYAHNKI.

Residues 98–166 form a disordered region; sequence VQKPPHQRGR…RGPPPKMRES (69 aa). Residues 100–121 show a composition bias toward basic residues; it reads KPPHQRGRFRNMRNSRSGRGRN. The residue at position 128 (Thr128) is a Phosphothreonine. A compositionally biased stretch (basic residues) spans 147–156; the sequence is GRGMGKKFGH. An RNA gate region spans residues 291–305; sequence EFDLLTVNESSVEPP.

This sequence belongs to the eIF-3 subunit D family. As to quaternary structure, component of the eukaryotic translation initiation factor 3 (eIF-3) complex. The eIF-3 complex interacts with pix.

The protein resides in the cytoplasm. In terms of biological role, mRNA cap-binding component of the eukaryotic translation initiation factor 3 (eIF-3) complex, which is involved in protein synthesis of a specialized repertoire of mRNAs and, together with other initiation factors, stimulates binding of mRNA and methionyl-tRNAi to the 40S ribosome. The eIF-3 complex specifically targets and initiates translation of a subset of mRNAs involved in cell proliferation. In the eIF-3 complex, eif3d specifically recognizes and binds the 7-methylguanosine cap of a subset of mRNAs. The sequence is that of Eukaryotic translation initiation factor 3 subunit D-1 from Drosophila simulans (Fruit fly).